We begin with the raw amino-acid sequence, 653 residues long: ATP-dependent rRNA helicase SPB4 (653 aa).

The Q motif motif lies at 17–45 (WQALTPPLSEWILDAVAAMGFTRMTPVQA). Residues 48-257 (IPLFMGHKDV…RVGLRNPVKI (210 aa)) enclose the Helicase ATP-binding domain. Position 61 to 68 (61 to 68 (AVTGSGKT)) interacts with ATP. Positions 205–208 (DEAD) match the DEAD box motif. The Helicase C-terminal domain occupies 291–444 (AIRQILNSID…SPPVALSDTL (154 aa)). The disordered stretch occupies residues 534–653 (KQREKHRQES…DGESEFEGFD (120 aa)). Positions 558 to 569 (PSSSSNNDTAPW) are enriched in polar residues. A coiled-coil region spans residues 571-627 (KTLEKKSDKEKRRERKRAKKEREHWEKMTEEEKTKSRETHQMLEELRKKNRQELNAK). 2 stretches are compositionally biased toward basic and acidic residues: residues 572-581 (TLEKKSDKEK) and 590-626 (KEREHWEKMTEEEKTKSRETHQMLEELRKKNRQELNA). A compositionally biased stretch (polar residues) spans 627-636 (KSHTSSSVLS). Positions 641-653 (AELDGESEFEGFD) are enriched in acidic residues.

Belongs to the DEAD box helicase family. DDX55/SPB4 subfamily. In terms of assembly, component of pre-60S ribosomal complexes.

Its subcellular location is the nucleus. The protein localises to the nucleolus. It catalyses the reaction ATP + H2O = ADP + phosphate + H(+). In terms of biological role, ATP-binding RNA helicase involved in the biogenesis of 60S ribosomal subunits. Binds 90S pre-ribosomal particles and dissociates from pre-60S ribosomal particles after processing of 27SB pre-rRNA. Required for the normal formation of 18S rRNA through the processing of pre-rRNAs at sites A0, A1 and A2, and the normal formation of 25S and 5.8S rRNAs through the processing of pre-rRNAs at sites C1 and C2. In Coccidioides immitis (strain RS) (Valley fever fungus), this protein is ATP-dependent rRNA helicase SPB4.